The sequence spans 64 residues: Large ribosomal subunit protein bL35 (64 aa).

The disordered stretch occupies residues M1 to R29.

It belongs to the bacterial ribosomal protein bL35 family.

The polypeptide is Large ribosomal subunit protein bL35 (Pseudarthrobacter chlorophenolicus (strain ATCC 700700 / DSM 12829 / CIP 107037 / JCM 12360 / KCTC 9906 / NCIMB 13794 / A6) (Arthrobacter chlorophenolicus)).